A 432-amino-acid polypeptide reads, in one-letter code: Adenylosuccinate synthetase (432 aa).

Residues 12–18 and 40–42 each bind GTP; these read GDEGKGK and GHT. The active-site Proton acceptor is Asp13. 2 residues coordinate Mg(2+): Asp13 and Gly40. Residues 13-16, 38-41, Thr132, Arg146, Gln226, Thr241, and Arg305 contribute to the IMP site; these read DEGK and NAGH. The Proton donor role is filled by His41. 301-307 contacts substrate; the sequence is VVTGRKR. Residues Arg307, 333–335, and 415–417 each bind GTP; these read KLD and STS.

Belongs to the adenylosuccinate synthetase family. In terms of assembly, homodimer. It depends on Mg(2+) as a cofactor.

It is found in the cytoplasm. The enzyme catalyses IMP + L-aspartate + GTP = N(6)-(1,2-dicarboxyethyl)-AMP + GDP + phosphate + 2 H(+). It participates in purine metabolism; AMP biosynthesis via de novo pathway; AMP from IMP: step 1/2. Plays an important role in the de novo pathway of purine nucleotide biosynthesis. Catalyzes the first committed step in the biosynthesis of AMP from IMP. The protein is Adenylosuccinate synthetase of Mesorhizobium japonicum (strain LMG 29417 / CECT 9101 / MAFF 303099) (Mesorhizobium loti (strain MAFF 303099)).